Reading from the N-terminus, the 335-residue chain is ATP-dependent 6-phosphofructokinase (335 aa).

Gly11 provides a ligand contact to ATP. Arg21–Arg25 lines the ADP pocket. Residues Arg72 to Tyr73 and Gly102 to Ser105 contribute to the ATP site. Asp103 serves as a coordination point for Mg(2+). Position 125 to 127 (Thr125 to Asp127) interacts with substrate. Asp127 serves as the catalytic Proton acceptor. Residue Arg154 coordinates ADP. Residues Arg162 and Met169–Arg171 each bind substrate. Residues Gly185–Asp187 and Lys213–His215 contribute to the ADP site. Substrate-binding positions include Glu222, Arg244, and His250–Arg253.

It belongs to the phosphofructokinase type A (PFKA) family. ATP-dependent PFK group I subfamily. Prokaryotic clade 'B1' sub-subfamily. In terms of assembly, homotetramer. Mg(2+) serves as cofactor.

Its subcellular location is the cytoplasm. The catalysed reaction is beta-D-fructose 6-phosphate + ATP = beta-D-fructose 1,6-bisphosphate + ADP + H(+). The protein operates within carbohydrate degradation; glycolysis; D-glyceraldehyde 3-phosphate and glycerone phosphate from D-glucose: step 3/4. Allosterically activated by ADP and other diphosphonucleosides, and allosterically inhibited by phosphoenolpyruvate. In terms of biological role, catalyzes the phosphorylation of D-fructose 6-phosphate to fructose 1,6-bisphosphate by ATP, the first committing step of glycolysis. This chain is ATP-dependent 6-phosphofructokinase, found in Streptococcus pneumoniae serotype 4 (strain ATCC BAA-334 / TIGR4).